Here is a 475-residue protein sequence, read N- to C-terminus: Divinyl ether synthase CYP74M1 (475 aa).

Cysteine 427 provides a ligand contact to heme.

The protein belongs to the cytochrome P450 family. Heme serves as cofactor.

It carries out the reaction (13S)-hydroperoxy-(9Z,11E)-octadecadienoate = etheroleate + H2O. The enzyme catalyses (13S)-hydroperoxy-(9Z,11E,15Z)-octadecatrienoate = etherolenate + H2O. It functions in the pathway lipid metabolism; oxylipin biosynthesis. In terms of biological role, divinyl ether synthase involved in oxylipin biosynthesis. Catalyzes the conversion of (13S)-hydroperoxy-(9Z,11E)-octadecadienoate (13-HPOD) to etheroleate and (13S)-hydroperoxy-(9Z,11E,15Z)-octadecatrienoate (13-HPOT) to etherolenate. Has no activity with the corresponding 9-hydroperoxides (9-HPOD and 9-HPOT). In Selaginella moellendorffii (Spikemoss), this protein is Divinyl ether synthase CYP74M1.